Here is a 439-residue protein sequence, read N- to C-terminus: Protease Do-like 1, chloroplastic (439 aa).

The serine protease stretch occupies residues 154–323; sequence QGSGSGFVWD…IPVDTVGGIV (170 aa). Catalysis depends on charge relay system residues H173, D203, and S282. Positions 326-423 constitute a PDZ domain; sequence LVRFGKVTRP…EVTVEVLRGD (98 aa).

This sequence belongs to the peptidase S1C family. In terms of assembly, interacts with PTAC16 and other potential targets for degradation under high light conditions.

It localises to the plastid. It is found in the chloroplast thylakoid membrane. With respect to regulation, inhibited by phenylmethylsulfonyl fluoride and O-phenanthroline. Its function is as follows. Serine protease that is required at high temperature. May be involved in the degradation of damaged proteins. In vivo, can degrade beta-casein. The sequence is that of Protease Do-like 1, chloroplastic (DEGP1) from Arabidopsis thaliana (Mouse-ear cress).